The primary structure comprises 208 residues: Uracil phosphoribosyltransferase (208 aa).

5-phospho-alpha-D-ribose 1-diphosphate is bound by residues Arg-78, Arg-103, and 130 to 138 (DPMLATANS). Uracil is bound by residues Ile-193 and 198–200 (GDA). Residue Asp-199 coordinates 5-phospho-alpha-D-ribose 1-diphosphate.

It belongs to the UPRTase family. It depends on Mg(2+) as a cofactor.

It carries out the reaction UMP + diphosphate = 5-phospho-alpha-D-ribose 1-diphosphate + uracil. It functions in the pathway pyrimidine metabolism; UMP biosynthesis via salvage pathway; UMP from uracil: step 1/1. With respect to regulation, allosterically activated by GTP. Its function is as follows. Catalyzes the conversion of uracil and 5-phospho-alpha-D-ribose 1-diphosphate (PRPP) to UMP and diphosphate. The protein is Uracil phosphoribosyltransferase of Brucella melitensis biotype 2 (strain ATCC 23457).